Reading from the N-terminus, the 505-residue chain is MFS efflux pump atnC (505 aa).

A run of 12 helical transmembrane segments spans residues 48–68 (VLQVILLCASATLTLDIGLTV), 117–137 (LIGWQTVFDGIPAIFLAIPYG), 148–168 (VLLLCFLGLALSTAWALLVCW), 181–201 (LFQCLGGGPAVATAVLEATIA), 216–236 (LQATVLISDILANPLSSVLMA), 240–260 (WTPCFLGVGIQALATVLLIAL), 304–324 (VAGLVFSLLILTVSAESLDFL), 343–363 (LSLRAVVEFGLLLVVGSLLLF), 377–399 (LLIARLSLGLIVAGLLILSLSPT), 403–425 (AILVYTLGAGFQPAIMSLLASLW), 439–459 (TVAIILAVGGVISGPLISLMY), and 469–489 (WVGLPYFVASGLCAGIAGVLL).

The protein belongs to the major facilitator superfamily.

The protein resides in the membrane. Its pathway is secondary metabolite biosynthesis. Its function is as follows. MFS efflux pump; part of the gene cluster that mediates the biosynthesis of aspercryptins, linear lipopeptides built from six amino acids including 2 highly unusual and nonproteogenic amino acids, 2-amino-octanoic acid (2aoa) and 2-amino-dodecanol (2adol). The sequence is that of MFS efflux pump atnC from Emericella nidulans (strain FGSC A4 / ATCC 38163 / CBS 112.46 / NRRL 194 / M139) (Aspergillus nidulans).